The sequence spans 469 residues: Diaminopimelate decarboxylase (469 aa).

Residues 1–23 form a disordered region; the sequence is MLSTEMPLPTTGSTLLKTPASPS. Position 93 is an N6-(pyridoxal phosphate)lysine (lysine 93). Pyridoxal 5'-phosphate is bound by residues glycine 279 and 321-324; that span reads EPGR. Residues arginine 324, arginine 361, and tyrosine 365 each contribute to the substrate site. The Proton donor role is filled by cysteine 392. Positions 393 and 421 each coordinate substrate. Tyrosine 421 serves as a coordination point for pyridoxal 5'-phosphate.

Belongs to the Orn/Lys/Arg decarboxylase class-II family. LysA subfamily. In terms of assembly, homodimer. Pyridoxal 5'-phosphate serves as cofactor.

The catalysed reaction is meso-2,6-diaminopimelate + H(+) = L-lysine + CO2. Its pathway is amino-acid biosynthesis; L-lysine biosynthesis via DAP pathway; L-lysine from DL-2,6-diaminopimelate: step 1/1. In terms of biological role, specifically catalyzes the decarboxylation of meso-diaminopimelate (meso-DAP) to L-lysine. This is Diaminopimelate decarboxylase from Synechocystis sp. (strain ATCC 27184 / PCC 6803 / Kazusa).